The sequence spans 324 residues: Acetyl-coenzyme A carboxylase carboxyl transferase subunit alpha (324 aa).

Residues 44–298 (RFQNQLVKLQ…KKELTEQLDS (255 aa)) form the CoA carboxyltransferase C-terminal domain.

It belongs to the AccA family. Acetyl-CoA carboxylase is a heterohexamer composed of biotin carboxyl carrier protein (accB), biotin carboxylase (accC) and two subunits each of ACCase subunit alpha (accA) and ACCase subunit beta (accD).

It is found in the plastid. It localises to the chloroplast. It carries out the reaction N(6)-carboxybiotinyl-L-lysyl-[protein] + acetyl-CoA = N(6)-biotinyl-L-lysyl-[protein] + malonyl-CoA. The protein operates within lipid metabolism; malonyl-CoA biosynthesis; malonyl-CoA from acetyl-CoA: step 1/1. Functionally, component of the acetyl coenzyme A carboxylase (ACC) complex. First, biotin carboxylase catalyzes the carboxylation of biotin on its carrier protein (BCCP) and then the CO(2) group is transferred by the carboxyltransferase to acetyl-CoA to form malonyl-CoA. This Pyropia yezoensis (Susabi-nori) protein is Acetyl-coenzyme A carboxylase carboxyl transferase subunit alpha.